Reading from the N-terminus, the 598-residue chain is UvrABC system protein C (598 aa).

The GIY-YIG domain maps to Asp-14–Ile-91. Residues Asp-196–Met-231 enclose the UVR domain.

The protein belongs to the UvrC family. In terms of assembly, interacts with UvrB in an incision complex.

It is found in the cytoplasm. The UvrABC repair system catalyzes the recognition and processing of DNA lesions. UvrC both incises the 5' and 3' sides of the lesion. The N-terminal half is responsible for the 3' incision and the C-terminal half is responsible for the 5' incision. The chain is UvrABC system protein C from Streptococcus pyogenes serotype M18 (strain MGAS8232).